A 572-amino-acid polypeptide reads, in one-letter code: Hexokinase (572 aa).

The 444-residue stretch at 49–492 folds into the Hexokinase domain; sequence DEPPISLETV…SGKGAALITA (444 aa). Residues 105-237 form a hexokinase small subdomain region; it reads NGTEEGRFIA…DIKVEVVALI (133 aa). D-glucose 6-phosphate contacts are provided by residues 116–120 and Ser-185; that span reads DLGGT. An ATP-binding site is contributed by 116-121; it reads DLGGTN. Substrate is bound by residues 185 to 186, 202 to 203, and 238 to 239; these read SY, TK, and ND. Positions 238 to 481 are hexokinase large subdomain; the sequence is NDTVGTMVAA…LKFKLLQTAD (244 aa). 2 residues coordinate D-glucose 6-phosphate: Asp-239 and Thr-263. Thr-263 is a binding site for ATP. Substrate-binding residues include Asn-266, Glu-297, and Asp-331. Residues 336–337, 373–377, and 448–452 each bind ATP; these read GK, TKYIS, and STYKY. D-glucose 6-phosphate-binding positions include 446 to 448 and Ser-483; that span reads DGS.

Belongs to the hexokinase family.

The enzyme catalyses a D-hexose + ATP = a D-hexose 6-phosphate + ADP + H(+). The catalysed reaction is D-mannose + ATP = D-mannose 6-phosphate + ADP + H(+). It carries out the reaction D-fructose + ATP = D-fructose 6-phosphate + ADP + H(+). It catalyses the reaction D-glucose + ATP = D-glucose 6-phosphate + ADP + H(+). Its pathway is carbohydrate metabolism; hexose metabolism. The protein operates within carbohydrate degradation; glycolysis; D-glyceraldehyde 3-phosphate and glycerone phosphate from D-glucose: step 1/4. Its activity is regulated as follows. Activated by glucose-6-phosphate. Inhibited by N-acetylglucosamine, glucosamine, mannoheptulose and ADP. In terms of biological role, active against glucose, fructose, mannose, maltose and galactose. In Brugia malayi (Filarial nematode worm), this protein is Hexokinase.